The primary structure comprises 377 residues: Anhydro-N-acetylmuramic acid kinase (377 aa).

Residue 14 to 21 (GTSLDGVD) participates in ATP binding.

It belongs to the anhydro-N-acetylmuramic acid kinase family.

It carries out the reaction 1,6-anhydro-N-acetyl-beta-muramate + ATP + H2O = N-acetyl-D-muramate 6-phosphate + ADP + H(+). It functions in the pathway amino-sugar metabolism; 1,6-anhydro-N-acetylmuramate degradation. Its pathway is cell wall biogenesis; peptidoglycan recycling. Functionally, catalyzes the specific phosphorylation of 1,6-anhydro-N-acetylmuramic acid (anhMurNAc) with the simultaneous cleavage of the 1,6-anhydro ring, generating MurNAc-6-P. Is required for the utilization of anhMurNAc either imported from the medium or derived from its own cell wall murein, and thus plays a role in cell wall recycling. The chain is Anhydro-N-acetylmuramic acid kinase from Pasteurella multocida (strain Pm70).